We begin with the raw amino-acid sequence, 1236 residues long: Calcium-activated potassium channel subunit alpha-1 (1236 aa).

A compositionally biased stretch (gly residues) spans 1–21; that stretch reads MANGGGGGGGSSGGGGGGGGS. The tract at residues 1 to 61 is disordered; it reads MANGGGGGGG…SSSSSSSSSV (61 aa). Topologically, residues 1 to 86 are extracellular; sequence MANGGGGGGG…VPCDSRGQRM (86 aa). Residues 39–60 are compositionally biased toward low complexity; sequence SSSSSSSSSSSSSSSSSSSSSS. A helical transmembrane segment spans residues 87 to 107; that stretch reads WWAFLASSMVTFFGGLFIILL. Topologically, residues 108 to 178 are cytoplasmic; that stretch reads WRTLKYLWTV…MISAQTLTGR (71 aa). S-palmitoyl cysteine attachment occurs at residues Cys-118, Cys-119, and Cys-121. A helical membrane pass occupies residues 179–199; that stretch reads VLVVLVFALSIGALVIYFIDS. At 200-214 the chain is on the extracellular side; the sequence is SNPIESCQNFYKDFT. A helical membrane pass occupies residues 215 to 235; it reads LQIDMAFNVFFLLYFGLRFIA. Over 236–239 the chain is Cytoplasmic; it reads ANDK. The chain crosses the membrane as a helical span at residues 240–260; sequence LWFWLEVNSVVDFFTVPPVFV. The Extracellular portion of the chain corresponds to 261–264; it reads SVYL. A helical transmembrane segment spans residues 265–285; the sequence is NRSWLGLRFLRALRLIQFSEI. Topologically, residues 286-300 are cytoplasmic; the sequence is LQFLNILKTSNSIKL. A helical transmembrane segment spans residues 301 to 321; the sequence is VNLLSIFISTWLTAAGFIHLV. Residues 322-335 lie on the Extracellular side of the membrane; it reads ENSGDPWENFQNNQ. The segment at residues 336–358 is an intramembrane region (pore-forming); the sequence is ALTYWECVYLLMVTMSTVGYGDV. A Selectivity for potassium motif is present at residues 352 to 355; sequence TVGY. Over 359–367 the chain is Extracellular; sequence YAKTTLGRL. Residues 368-388 traverse the membrane as a helical segment; the sequence is FMVFFILGGLAMFASYVPEII. The Cytoplasmic portion of the chain corresponds to 389-1236; it reads ELIGNRKKYG…KQKYVQEERL (848 aa). The RCK N-terminal 1 domain occupies 407 to 549; sequence RKHIVVCGHI…WNWKEGDDAI (143 aa). 3 residues coordinate Mg(2+): Glu-439, Gln-462, and Glu-464. The tract at residues 556-576 is segment S7; that stretch reads LGFIAQSCLAQGLSTMLANLF. Residues 613 to 633 form a segment S8 region; that stretch reads LSFPTVCELCFVKLKLLMIAI. The tract at residues 677 to 681 is heme-binding motif; the sequence is CKACH. The interval 757–787 is disordered; it reads EDEQPSTLSPKKKQRNGGMRNSPNTSPKLMR. At Thr-763 the chain carries Phosphothreonine. Residues Ser-765, Ser-778, and Ser-782 each carry the phosphoserine modification. The segment at 837-857 is segment S9; that stretch reads VLSGHVVVCIFGDVSSALIGL. The RCK N-terminal 2 domain maps to 839–983; the sequence is SGHVVVCIFG…MDRSSPDNSP (145 aa). Phosphothreonine is present on Thr-970. Phosphoserine is present on residues Ser-978 and Ser-982. Residues 1003–1025 carry the Calcium bowl motif; it reads TELVNDTNVQFLDQDDDDDPDTE. Ca(2+) contacts are provided by Gln-1012, Asp-1015, Asp-1018, and Asp-1020. The interval 1032 to 1052 is segment S10; it reads FACGTAFAVSVLDSLMSATYF. The span at 1186–1211 shows a compositional bias: low complexity; the sequence is RASLSHSSHSSQSSSKKSSSVHSIPS. The disordered stretch occupies residues 1186 to 1236; sequence RASLSHSSHSSQSSSKKSSSVHSIPSTANRQNRPKSRESRDKQKYVQEERL. Basic and acidic residues predominate over residues 1220 to 1236; it reads KSRESRDKQKYVQEERL. Phosphoserine occurs at positions 1221 and 1224.

It belongs to the potassium channel family. Calcium-activated (TC 1.A.1.3) subfamily. KCa1.1/KCNMA1 sub-subfamily. Homotetramer; which constitutes the calcium-activated potassium channel. Interacts with RAB11B. Interacts with beta subunits KCNMB1, KCNMB2, KCNMB3 and KCNMB4. Interacts with gamma subunits LRRC26, LRRC38, LRRC52 and LRRC55. Beta and gamma subunits are accessory, and modulate its activity. In terms of processing, phosphorylated. Phosphorylation by kinases such as PKA and/or PKG. In smooth muscles, phosphorylation affects its activity. Palmitoylation by ZDHHC22 and ZDHHC23 within the intracellular linker between the S0 and S1 transmembrane domains regulates localization to the plasma membrane. Depalmitoylated by LYPLA1 and LYPLAL1, leading to retard exit from the trans-Golgi network. Widely expressed. Except in myocytes, it is almost ubiquitously expressed.

The protein resides in the cell membrane. The catalysed reaction is K(+)(in) = K(+)(out). Its activity is regulated as follows. Ethanol and carbon monoxide-bound heme increase channel activation. Heme inhibits channel activation. In terms of biological role, potassium channel activated by both membrane depolarization or increase in cytosolic Ca(2+) that mediates export of K(+). It is also activated by the concentration of cytosolic Mg(2+). Its activation dampens the excitatory events that elevate the cytosolic Ca(2+) concentration and/or depolarize the cell membrane. It therefore contributes to repolarization of the membrane potential. Plays a key role in controlling excitability in a number of systems, such as regulation of the contraction of smooth muscle, the tuning of hair cells in the cochlea, regulation of transmitter release, and innate immunity. In smooth muscles, its activation by high level of Ca(2+), caused by ryanodine receptors in the sarcoplasmic reticulum, regulates the membrane potential. In cochlea cells, its number and kinetic properties partly determine the characteristic frequency of each hair cell and thereby helps to establish a tonotopic map. Kinetics of KCNMA1 channels are determined by alternative splicing, phosphorylation status and its combination with modulating beta subunits. Highly sensitive to both iberiotoxin (IbTx) and charybdotoxin (CTX). Possibly induces sleep when activated by melatonin and through melatonin receptor MTNR1A-dependent dissociation of G-beta and G-gamma subunits, leading to increased sensitivity to Ca(2+) and reduced synaptic transmission. Its function is as follows. Potassium channel activated by both membrane depolarization or increase in cytosolic Ca(2+) that mediates export of K(+). The chain is Calcium-activated potassium channel subunit alpha-1 from Homo sapiens (Human).